Reading from the N-terminus, the 65-residue chain is MAKSKDIRVTINLECINCAQNDEKRKKGISRYTTQKNRRNTPIRLELKKFCCYCNKHTIHKEIKK.

It belongs to the bacterial ribosomal protein bL33 family.

The protein resides in the plastid. Its subcellular location is the chloroplast. This is Large ribosomal subunit protein bL33c (rpl33) from Marchantia polymorpha (Common liverwort).